Reading from the N-terminus, the 389-residue chain is 23S rRNA (uracil(747)-C(5))-methyltransferase RlmC (389 aa).

The [4Fe-4S] cluster site is built by cysteine 6, cysteine 14, cysteine 17, and cysteine 92. Residues glutamine 217, phenylalanine 246, glutamate 273, and asparagine 319 each contribute to the S-adenosyl-L-methionine site. Cysteine 346 (nucleophile) is an active-site residue.

Belongs to the class I-like SAM-binding methyltransferase superfamily. RNA M5U methyltransferase family. RlmC subfamily.

The catalysed reaction is uridine(747) in 23S rRNA + S-adenosyl-L-methionine = 5-methyluridine(747) in 23S rRNA + S-adenosyl-L-homocysteine + H(+). Its function is as follows. Catalyzes the formation of 5-methyl-uridine at position 747 (m5U747) in 23S rRNA. The sequence is that of 23S rRNA (uracil(747)-C(5))-methyltransferase RlmC from Glaesserella parasuis serovar 5 (strain SH0165) (Haemophilus parasuis).